Consider the following 855-residue polypeptide: Protein translocase subunit SecA (855 aa).

ATP contacts are provided by residues Gln88, 106–110 (GEGKT), and Asp509. The disordered stretch occupies residues 815 to 837 (EANLQNKFEKKPARNEPCPCGSG). 4 residues coordinate Zn(2+): Cys832, Cys834, Cys843, and Cys844.

Belongs to the SecA family. In terms of assembly, monomer and homodimer. Part of the essential Sec protein translocation apparatus which comprises SecA, SecYEG and auxiliary proteins SecDF-YajC and YidC. It depends on Zn(2+) as a cofactor.

It is found in the cell inner membrane. The protein localises to the cytoplasm. It catalyses the reaction ATP + H2O + cellular proteinSide 1 = ADP + phosphate + cellular proteinSide 2.. Functionally, part of the Sec protein translocase complex. Interacts with the SecYEG preprotein conducting channel. Has a central role in coupling the hydrolysis of ATP to the transfer of proteins into and across the cell membrane, serving as an ATP-driven molecular motor driving the stepwise translocation of polypeptide chains across the membrane. The chain is Protein translocase subunit SecA from Campylobacter fetus subsp. fetus (strain 82-40).